The following is a 365-amino-acid chain: Chorismate synthase (365 aa).

Residues Arg48 and Arg54 each coordinate NADP(+). FMN is bound by residues Arg125–Ser127, Asn237–Ala238, Gly277, Lys292–Ser296, and Arg318.

It belongs to the chorismate synthase family. Homotetramer. FMNH2 serves as cofactor.

The enzyme catalyses 5-O-(1-carboxyvinyl)-3-phosphoshikimate = chorismate + phosphate. It participates in metabolic intermediate biosynthesis; chorismate biosynthesis; chorismate from D-erythrose 4-phosphate and phosphoenolpyruvate: step 7/7. Its function is as follows. Catalyzes the anti-1,4-elimination of the C-3 phosphate and the C-6 proR hydrogen from 5-enolpyruvylshikimate-3-phosphate (EPSP) to yield chorismate, which is the branch point compound that serves as the starting substrate for the three terminal pathways of aromatic amino acid biosynthesis. This reaction introduces a second double bond into the aromatic ring system. The sequence is that of Chorismate synthase from Verminephrobacter eiseniae (strain EF01-2).